Reading from the N-terminus, the 262-residue chain is Purine nucleoside phosphorylase SSP1584 (262 aa).

Zn(2+) contacts are provided by His79, Cys124, and His141.

This sequence belongs to the purine nucleoside phosphorylase YfiH/LACC1 family. In terms of assembly, homodimer. Cu(2+) is required as a cofactor. The cofactor is Zn(2+).

The enzyme catalyses adenosine + phosphate = alpha-D-ribose 1-phosphate + adenine. The catalysed reaction is S-methyl-5'-thioadenosine + phosphate = 5-(methylsulfanyl)-alpha-D-ribose 1-phosphate + adenine. It catalyses the reaction inosine + phosphate = alpha-D-ribose 1-phosphate + hypoxanthine. It carries out the reaction adenosine + H2O + H(+) = inosine + NH4(+). Functionally, purine nucleoside enzyme that catalyzes the phosphorolysis of adenosine and inosine nucleosides, yielding D-ribose 1-phosphate and the respective free bases, adenine and hypoxanthine. Also catalyzes the phosphorolysis of S-methyl-5'-thioadenosine into adenine and S-methyl-5-thio-alpha-D-ribose 1-phosphate. Also has adenosine deaminase activity. This is Purine nucleoside phosphorylase SSP1584 from Staphylococcus saprophyticus subsp. saprophyticus (strain ATCC 15305 / DSM 20229 / NCIMB 8711 / NCTC 7292 / S-41).